Reading from the N-terminus, the 1906-residue chain is A disintegrin and metalloproteinase with thrombospondin motifs 20 (1906 aa).

The N-terminal stretch at 1 to 26 (MRVAKWLTGLLCPISLLLTGSWEVRF) is a signal peptide. Residues 27–249 (HPRQEALVKT…RSQLHSRNKR (223 aa)) constitute a propeptide that is removed on maturation. N-linked (GlcNAc...) asparagine glycosylation is found at Asn-92 and Asn-221. The tract at residues 201–222 (PCEVSENQMEKTALPSQSSRNT) is disordered. The 210-residue stretch at 255–464 (RYVEVMVTAD…GHGECLLDKP (210 aa)) folds into the Peptidase M12B domain. Disulfide bonds link Cys-330–Cys-383, Cys-359–Cys-365, Cys-377–Cys-459, Cys-415–Cys-443, Cys-486–Cys-508, Cys-497–Cys-518, Cys-503–Cys-537, Cys-531–Cys-542, Cys-565–Cys-602, Cys-569–Cys-607, and Cys-580–Cys-592. Residue His-399 coordinates Zn(2+). Glu-400 is an active-site residue. Zn(2+) contacts are provided by His-403 and His-409. One can recognise a Disintegrin domain in the interval 465–552 (NGRTYDLSPQ…VTRDMETRPV (88 aa)). A TSP type-1 1 domain is found at 553-608 (DGEWGPWGPYSSCSRTCGGGIKSTARLCDRPEPRNGGRYCVGRRMKFRSCNTDSCP). N-linked (GlcNAc...) asparagine glycosylation is found at Asn-714, Asn-798, and Asn-805. Positions 721–842 (AGVFNSAHYG…FNIPIEERSN (122 aa)) are spacer. 7 consecutive TSP type-1 domains span residues 843–901 (LFSW…MDCE), 906–962 (IIGK…GSCV), 962–1015 (VLTR…NCNE), 1017–1074 (PCPS…RACA), 1075–1131 (SWHV…APCL), 1148–1202 (RAAQ…LCFS), and 1203–1260 (PCGE…AACP). Asn-1057 is a glycosylation site (N-linked (GlcNAc...) asparagine). Positions 1265–1295 (RAPSSSEQPSHVPSRNVPLTHKPGENQDQGA) are disordered. Residues 1266 to 1277 (APSSSEQPSHVP) are compositionally biased toward polar residues. TSP type-1 domains are found at residues 1300–1351 (RGNQ…RHCG), 1354–1411 (PCPH…HACP), 1412–1465 (EDVS…KACR), 1468–1526 (RCPS…QDCM), 1527–1584 (RYQW…PHCK), 1585–1648 (YSVV…LRSC), and 1650–1706 (HVAT…NDCK). The N-linked (GlcNAc...) asparagine glycan is linked to Asn-1562. The 200-residue stretch at 1707–1906 (LLTTCKELQV…MATGLSIQVL (200 aa)) folds into the GON domain. Residues Asn-1719, Asn-1759, and Asn-1777 are each glycosylated (N-linked (GlcNAc...) asparagine).

Zn(2+) serves as cofactor. Post-translationally, the precursor is cleaved by a furin endopeptidase. In terms of processing, glycosylated. Can be O-fucosylated by POFUT2 on a serine or a threonine residue found within the consensus sequence C1-X(2)-(S/T)-C2-G of the TSP type-1 repeat domains where C1 and C2 are the first and second cysteine residue of the repeat, respectively. Fucosylated repeats can then be further glycosylated by the addition of a beta-1,3-glucose residue by the glucosyltransferase, B3GALTL. Fucosylation mediates the efficient secretion of ADAMTS family members. Can also be C-glycosylated with one or two mannose molecules on tryptophan residues within the consensus sequence W-X-X-W of the TPRs, and N-glycosylated. These other glycosylations can also facilitate secretion. Expressed at low level in testis and brain.

Its subcellular location is the secreted. It is found in the extracellular space. It localises to the extracellular matrix. Functionally, may play a role in tissue-remodeling process occurring in both normal and pathological conditions. May have a protease-independent function in the transport from the endoplasmic reticulum to the Golgi apparatus of secretory cargos, mediated by the GON domain. This chain is A disintegrin and metalloproteinase with thrombospondin motifs 20 (Adamts20), found in Mus musculus (Mouse).